The chain runs to 498 residues: Trichoplein keratin filament-binding protein (498 aa).

Residues Cys-11 to Arg-39 are a coiled coil. Glycyl lysine isopeptide (Lys-Gly) (interchain with G-Cter in ubiquitin) cross-links involve residues Lys-50 and Lys-57. Coiled-coil stretches lie at residues Ala-66–Glu-136, Val-163–Glu-353, and Leu-380–Thr-479. Residues Lys-73–Asn-498 are interaction with keratin proteins. The interval Glu-167–Asn-189 is disordered. The span at Met-168–Asn-189 shows a compositional bias: basic and acidic residues. Residues Lys-259–Glu-425 are trichohyalin/plectin homology domain. The interval Gln-447 to Asn-498 is disordered.

It belongs to the TCHP family. As to quaternary structure, interacts specifically with keratin proteins including, KRT5, KRT6A, KRT8, KRT14, KRT16 and KRT18. Interacts with KCTD17. In terms of processing, ubiquitinated. Ubiquitination by the BCR(KCTD17) E3 ubiquitin ligase complex results in proteasomal degradation, and induces ciliogenesis. In terms of tissue distribution, expressed at high levels in normal urothelial and breast epithelial cells. Also expressed in the smooth muscle and endothelial cells. Reduced expression seen in advanced bladder and breast carcinomas (at protein level). Ubiquitous. Expressed at highest levels in the heart, skeletal muscle, kidney, liver and testis.

It is found in the cytoplasm. The protein localises to the cytoskeleton. Its subcellular location is the cell membrane. The protein resides in the mitochondrion. It localises to the cell junction. It is found in the desmosome. The protein localises to the microtubule organizing center. Its subcellular location is the centrosome. Tumor suppressor which has the ability to inhibit cell growth and be pro-apoptotic during cell stress. Inhibits cell growth in bladder and prostate cancer cells by a down-regulation of HSPB1 by inhibiting its phosphorylation. May act as a 'capping' or 'branching' protein for keratin filaments in the cell periphery. May regulate K8/K18 filament and desmosome organization mainly at the apical or peripheral regions of simple epithelial cells. Is a negative regulator of ciliogenesis. The sequence is that of Trichoplein keratin filament-binding protein from Homo sapiens (Human).